Consider the following 296-residue polypeptide: Light-independent protochlorophyllide reductase iron-sulfur ATP-binding protein (296 aa).

Residues glycine 39–threonine 44 and lysine 68 each bind ATP. Serine 43 contributes to the Mg(2+) binding site. Cysteine 124 and cysteine 158 together coordinate [4Fe-4S] cluster. Asparagine 209 to arginine 210 provides a ligand contact to ATP.

It belongs to the NifH/BchL/ChlL family. Homodimer. Protochlorophyllide reductase is composed of three subunits; ChlL, ChlN and ChlB. [4Fe-4S] cluster serves as cofactor.

The catalysed reaction is chlorophyllide a + oxidized 2[4Fe-4S]-[ferredoxin] + 2 ADP + 2 phosphate = protochlorophyllide a + reduced 2[4Fe-4S]-[ferredoxin] + 2 ATP + 2 H2O. The protein operates within porphyrin-containing compound metabolism; chlorophyll biosynthesis (light-independent). In terms of biological role, component of the dark-operative protochlorophyllide reductase (DPOR) that uses Mg-ATP and reduced ferredoxin to reduce ring D of protochlorophyllide (Pchlide) to form chlorophyllide a (Chlide). This reaction is light-independent. The L component serves as a unique electron donor to the NB-component of the complex, and binds Mg-ATP. The chain is Light-independent protochlorophyllide reductase iron-sulfur ATP-binding protein from Prochlorococcus marinus (strain MIT 9211).